The sequence spans 111 residues: uncharacterized protein (111 aa).

Homodimer, or homotetramer.

This is an uncharacterized protein from Bacillus subtilis (strain 168).